The following is a 154-amino-acid chain: Protein X (154 aa).

Positions 68 to 117 (PCALRFTSARRMETTVNAPWNLPTTLHKRTLGLSPRSTTWIEEYIKDCVF) are mitochondrial targeting sequence.

It belongs to the orthohepadnavirus protein X family. As to quaternary structure, may form homodimer. May interact with host CEBPA, CFLAR, CREB1, DDB1, E4F1, HBXIP, HSPD1/HSP60, NFKBIA, POLR2E and SMAD4. Interacts with host SMC5-SMC6 complex and induces its degradation. Interacts with host TRPC4AP; leading to prevent ubiquitination of TRPC4AP. Interacts with host PLSCR1; this interaction promotes ubiquitination and degradation of HBx and impairs HBx-mediated cell proliferation. In terms of processing, a fraction may be phosphorylated in insect cells and HepG2 cells, a human hepatoblastoma cell line. Phosphorylated in vitro by host protein kinase C or mitogen-activated protein kinase. N-acetylated in insect cells.

Its subcellular location is the host cytoplasm. The protein resides in the host nucleus. It is found in the host mitochondrion. Its function is as follows. Multifunctional protein that plays a role in silencing host antiviral defenses and promoting viral transcription. Does not seem to be essential for HBV infection. May be directly involved in development of cirrhosis and liver cancer (hepatocellular carcinoma). Most of cytosolic activities involve modulation of cytosolic calcium. The effect on apoptosis is controversial depending on the cell types in which the studies have been conducted. May induce apoptosis by localizing in mitochondria and causing loss of mitochondrial membrane potential. May also modulate apoptosis by binding host CFLAR, a key regulator of the death-inducing signaling complex (DISC). Promotes viral transcription by using the host E3 ubiquitin ligase DDB1 to target the SMC5-SMC6 complex to proteasomal degradation. This host complex would otherwise bind to viral episomal DNA, and prevents its transcription. Moderately stimulates transcription of many different viral and cellular transcription elements. Promoters and enhancers stimulated by HBx contain DNA binding sites for NF-kappa-B, AP-1, AP-2, c-EBP, ATF/CREB, or the calcium-activated factor NF-AT. The chain is Protein X from Homo sapiens (Human).